The sequence spans 728 residues: 1,4-alpha-glucan branching enzyme GlgB (728 aa).

Residue Asp-405 is the Nucleophile of the active site. Glu-458 (proton donor) is an active-site residue.

This sequence belongs to the glycosyl hydrolase 13 family. GlgB subfamily. As to quaternary structure, monomer.

It catalyses the reaction Transfers a segment of a (1-&gt;4)-alpha-D-glucan chain to a primary hydroxy group in a similar glucan chain.. It participates in glycan biosynthesis; glycogen biosynthesis. Catalyzes the formation of the alpha-1,6-glucosidic linkages in glycogen by scission of a 1,4-alpha-linked oligosaccharide from growing alpha-1,4-glucan chains and the subsequent attachment of the oligosaccharide to the alpha-1,6 position. The sequence is that of 1,4-alpha-glucan branching enzyme GlgB from Escherichia coli O139:H28 (strain E24377A / ETEC).